A 189-amino-acid polypeptide reads, in one-letter code: Peptide deformylase (189 aa).

Residues Cys-98 and His-140 each contribute to the Fe cation site. Glu-141 is a catalytic residue. His-144 contributes to the Fe cation binding site.

This sequence belongs to the polypeptide deformylase family. Fe(2+) serves as cofactor.

It carries out the reaction N-terminal N-formyl-L-methionyl-[peptide] + H2O = N-terminal L-methionyl-[peptide] + formate. In terms of biological role, removes the formyl group from the N-terminal Met of newly synthesized proteins. Requires at least a dipeptide for an efficient rate of reaction. N-terminal L-methionine is a prerequisite for activity but the enzyme has broad specificity at other positions. This is Peptide deformylase from Porphyromonas gingivalis (strain ATCC 33277 / DSM 20709 / CIP 103683 / JCM 12257 / NCTC 11834 / 2561).